We begin with the raw amino-acid sequence, 378 residues long: Non-functional pseudokinase ZRK6 (378 aa).

A Protein kinase domain is found at 34–378 (DGKCNPIKNF…SNNRSQMSSI (345 aa)). Residues 40–48 (IKNFSYDQI) and lysine 83 contribute to the ATP site.

The protein belongs to the protein kinase superfamily. Ser/Thr protein kinase family. ZRK subfamily. In terms of assembly, interacts with RPP13L4/ZAR1.

The sequence is that of Non-functional pseudokinase ZRK6 from Arabidopsis thaliana (Mouse-ear cress).